The following is a 255-amino-acid chain: Glioma pathogenesis-related protein 1 (255 aa).

An N-terminal signal peptide occupies residues methionine 1 to serine 17. Residues glutamine 39 to tyrosine 164 enclose the SCP domain. The chain crosses the membrane as a helical span at residues serine 224–valine 244.

The protein belongs to the CRISP family.

The protein localises to the membrane. This is Glioma pathogenesis-related protein 1 (Glipr1) from Mus musculus (Mouse).